The sequence spans 239 residues: Serine protease SplD (239 aa).

Residues 1–36 form the signal peptide; it reads MNKNIIIKSIAALTILTSITGVGTTVVDGIQQTAKA. Catalysis depends on charge relay system residues His-75, Asp-114, and Ser-192.

This sequence belongs to the peptidase S1B family.

It localises to the secreted. The protein is Serine protease SplD (splD) of Staphylococcus aureus (strain Mu3 / ATCC 700698).